Consider the following 151-residue polypeptide: Small ribosomal subunit protein uS15 (151 aa).

Positions 1–20 are disordered; that stretch reads MARLHSGKRGSSGSTKPLRT.

Belongs to the universal ribosomal protein uS15 family. In terms of assembly, part of the 30S ribosomal subunit.

In Methanococcus vannielii (strain ATCC 35089 / DSM 1224 / JCM 13029 / OCM 148 / SB), this protein is Small ribosomal subunit protein uS15.